A 149-amino-acid polypeptide reads, in one-letter code: Ribosomal RNA large subunit methyltransferase H (149 aa).

Residues Leu71, Gly98, and 117–122 contribute to the S-adenosyl-L-methionine site; that span reads LSKLTL.

Belongs to the RNA methyltransferase RlmH family. In terms of assembly, homodimer.

It localises to the cytoplasm. The enzyme catalyses pseudouridine(1915) in 23S rRNA + S-adenosyl-L-methionine = N(3)-methylpseudouridine(1915) in 23S rRNA + S-adenosyl-L-homocysteine + H(+). Functionally, specifically methylates the pseudouridine at position 1915 (m3Psi1915) in 23S rRNA. In Campylobacter jejuni subsp. doylei (strain ATCC BAA-1458 / RM4099 / 269.97), this protein is Ribosomal RNA large subunit methyltransferase H.